The following is a 182-amino-acid chain: Large ribosomal subunit protein uL10 (182 aa).

Belongs to the universal ribosomal protein uL10 family. Part of the ribosomal stalk of the 50S ribosomal subunit. The N-terminus interacts with L11 and the large rRNA to form the base of the stalk. The C-terminus forms an elongated spine to which L12 dimers bind in a sequential fashion forming a multimeric L10(L12)X complex.

Functionally, forms part of the ribosomal stalk, playing a central role in the interaction of the ribosome with GTP-bound translation factors. The polypeptide is Large ribosomal subunit protein uL10 (Chloroflexus aurantiacus (strain ATCC 29364 / DSM 637 / Y-400-fl)).